A 112-amino-acid chain; its full sequence is Flowering-promoting factor 1-like protein 2 (112 aa).

Belongs to the FPF1 family. In terms of tissue distribution, expressed in leaves and in some parts of the flowers, mainly in the sepals.

Its function is as follows. Modulates the competence to flowering of apical meristems. The sequence is that of Flowering-promoting factor 1-like protein 2 (FLP2) from Arabidopsis thaliana (Mouse-ear cress).